The sequence spans 358 residues: Snurportin-1 (358 aa).

The residue at position 1 (M1) is an N-acetylmethionine. Disordered regions lie at residues M1–P26 and D69–D90. The tract at residues M1–L65 is necessary for interaction with KPNB1 and m3G-cap U1 and U5 snRNP import receptor activity. Positions M1–G160 are necessary for interaction with XPO1. The segment covering A7–A22 has biased composition (polar residues). The IBB domain occupies S11–M73. At S75 the chain carries Phosphoserine. Positions G128 to R130 are interaction with m3G-cap structure. Positions M210 to A329 are necessary for binding to the m3G-cap structure. Over residues K315 to S341 the composition is skewed to basic and acidic residues. The tract at residues K315–N358 is disordered. The segment covering P349–N358 has biased composition (polar residues). S351 carries the post-translational modification Phosphoserine.

It belongs to the snurportin family. Component of an import snRNP complex composed of KPNB1, SNUPN, SMN1 and ZNF259. Component of a nuclear export receptor complex composed of KPNB1, Ran, SNUPN and XPO1. Found in a trimeric export complex with SNUPN, Ran and XPO1. Interacts (via IBB domain) with KPNB1; the interaction is direct. Interacts with DDX20, IPO7, SMN1, SNRPB and XPO1. Interacts directly with XPO1. Its interaction with XPO1 and binding to m3G-cap U snRNPs appears to be mutually exclusive. Can form homomers.

The protein resides in the nucleus. It is found in the cytoplasm. Its function is as follows. Functions as an U snRNP-specific nuclear import adapter. Involved in the trimethylguanosine (m3G)-cap-dependent nuclear import of U snRNPs. Binds specifically to the terminal m3G-cap U snRNAs. The sequence is that of Snurportin-1 (Snupn) from Mus musculus (Mouse).